The primary structure comprises 1391 residues: DNA-directed RNA polymerase subunit beta' (1391 aa).

Zn(2+)-binding residues include C72, C74, C87, and C90. Positions 462, 464, and 466 each coordinate Mg(2+). Zn(2+)-binding residues include C816, C890, C897, and C900.

It belongs to the RNA polymerase beta' chain family. As to quaternary structure, the RNAP catalytic core consists of 2 alpha, 1 beta, 1 beta' and 1 omega subunit. When a sigma factor is associated with the core the holoenzyme is formed, which can initiate transcription. The cofactor is Mg(2+). Requires Zn(2+) as cofactor.

The enzyme catalyses RNA(n) + a ribonucleoside 5'-triphosphate = RNA(n+1) + diphosphate. Functionally, DNA-dependent RNA polymerase catalyzes the transcription of DNA into RNA using the four ribonucleoside triphosphates as substrates. The sequence is that of DNA-directed RNA polymerase subunit beta' from Neisseria meningitidis serogroup C (strain 053442).